The primary structure comprises 198 residues: Recombination protein RecR (198 aa).

The C4-type zinc-finger motif lies at 58 to 73; that stretch reads CSICGNFTDSDPCAIC. Positions 81–175 constitute a Toprim domain; the sequence is SIICVIEEPK…KVTRIAHGIP (95 aa).

Belongs to the RecR family.

May play a role in DNA repair. It seems to be involved in an RecBC-independent recombinational process of DNA repair. It may act with RecF and RecO. This chain is Recombination protein RecR, found in Clostridium kluyveri (strain NBRC 12016).